The chain runs to 353 residues: S-adenosylmethionine:tRNA ribosyltransferase-isomerase (353 aa).

It belongs to the QueA family. Monomer.

Its subcellular location is the cytoplasm. It catalyses the reaction 7-aminomethyl-7-carbaguanosine(34) in tRNA + S-adenosyl-L-methionine = epoxyqueuosine(34) in tRNA + adenine + L-methionine + 2 H(+). It participates in tRNA modification; tRNA-queuosine biosynthesis. Its function is as follows. Transfers and isomerizes the ribose moiety from AdoMet to the 7-aminomethyl group of 7-deazaguanine (preQ1-tRNA) to give epoxyqueuosine (oQ-tRNA). This is S-adenosylmethionine:tRNA ribosyltransferase-isomerase from Rickettsia bellii (strain RML369-C).